We begin with the raw amino-acid sequence, 37 residues long: Myo-inositol-binding protein (37 aa).

Belongs to the bacterial solute-binding protein 2 family.

It is found in the periplasm. The sequence is that of Myo-inositol-binding protein from Pseudomonas sp.